A 431-amino-acid polypeptide reads, in one-letter code: Tol-Pal system protein TolB (431 aa).

The N-terminal stretch at 1–24 is a signal peptide; that stretch reads MMKFLTRMLSAFAVLFFAISTAQA. The segment at 318–340 is disordered; the sequence is QVYRMSSSGGAASPVGGRGSAQI. Low complexity predominate over residues 323–332; the sequence is SSSGGAASPV.

Belongs to the TolB family. In terms of assembly, the Tol-Pal system is composed of five core proteins: the inner membrane proteins TolA, TolQ and TolR, the periplasmic protein TolB and the outer membrane protein Pal. They form a network linking the inner and outer membranes and the peptidoglycan layer.

It localises to the periplasm. Functionally, part of the Tol-Pal system, which plays a role in outer membrane invagination during cell division and is important for maintaining outer membrane integrity. In Mannheimia succiniciproducens (strain KCTC 0769BP / MBEL55E), this protein is Tol-Pal system protein TolB.